The chain runs to 164 residues: Ubiquitin-conjugating enzyme E2 2 (164 aa).

Positions 4 to 150 (PARRRLMRDF…VKETVEKSWE (147 aa)) constitute a UBC core domain. Cys-88 acts as the Glycyl thioester intermediate in catalysis.

The protein belongs to the ubiquitin-conjugating enzyme family.

Its subcellular location is the cytoplasm. The protein localises to the nucleus. It carries out the reaction S-ubiquitinyl-[E1 ubiquitin-activating enzyme]-L-cysteine + [E2 ubiquitin-conjugating enzyme]-L-cysteine = [E1 ubiquitin-activating enzyme]-L-cysteine + S-ubiquitinyl-[E2 ubiquitin-conjugating enzyme]-L-cysteine.. The protein operates within protein modification; protein ubiquitination. In terms of biological role, catalyzes the covalent attachment of ubiquitin to other proteins. Plays a role in transcription regulation by catalyzing the monoubiquitination of histone H2B to form H2BK123ub1. H2BK123ub1 gives a specific tag for epigenetic transcriptional activation and is also a prerequisite for H3K4me and H3K79me formation. Also involved in postreplication repair of UV-damaged DNA, in N-end rule-dependent protein degradation and in sporulation. The polypeptide is Ubiquitin-conjugating enzyme E2 2 (UBC2) (Kluyveromyces lactis (strain ATCC 8585 / CBS 2359 / DSM 70799 / NBRC 1267 / NRRL Y-1140 / WM37) (Yeast)).